A 301-amino-acid polypeptide reads, in one-letter code: Rhodopsin (301 aa).

Over 1–18 (LHMIHLHWYQYPPMNPMM) the chain is Extracellular. A helical transmembrane segment spans residues 19 to 43 (YPLLLIFMLFTGILCLAGNFVTIWV). Over 44–55 (FMNTKSLRTPAN) the chain is Cytoplasmic. Residues 56–78 (LLVVNLAMSDFLMMFTMFPPMMV) traverse the membrane as a helical segment. The Extracellular portion of the chain corresponds to 79–92 (TCYYHTWTLGPTFC). Cys-92 and Cys-169 form a disulfide bridge. Residues 93 to 115 (QVYAFLGNLCGCASIWTMVFITF) form a helical membrane-spanning segment. Positions 116-118 (DRY) match the 'Ionic lock' involved in activated form stabilization motif. Over 116–134 (DRYNVIVKGVAGEPLSTKK) the chain is Cytoplasmic. Residues 135 to 155 (ASLWILTIWVLSTTWCIAPFF) traverse the membrane as a helical segment. The Extracellular portion of the chain corresponds to 156-182 (GWNHYVPEGNLTGCGTDYLSEDILSRS). N-linked (GlcNAc...) asparagine glycosylation is present at Asn-165. The helical transmembrane segment at 183-204 (YLYVYSTWVYFLPLAITIYCYV) threads the bilayer. Topologically, residues 205-245 (FIIKAVAAHEKGMRDQAKKMGIKSLRNEEAQKTSAECRLAK) are cytoplasmic. Residues 246 to 267 (IAMTTVALWFIAWTPCLLINWV) form a helical membrane-spanning segment. Residues 268-278 (GMFARSYLSPV) are Extracellular-facing. A helical membrane pass occupies residues 279–300 (YTIWGYVFAKANAVYNPIVYAI). Lys-288 is modified (N6-(retinylidene)lysine).

This sequence belongs to the G-protein coupled receptor 1 family. Opsin subfamily. As to quaternary structure, homodimer. Interacts with GNAQ. In terms of processing, contains one covalently linked retinal chromophore.

Its subcellular location is the cell projection. It is found in the rhabdomere membrane. Photoreceptor required for image-forming vision at low light intensity. Can use both retinal and 3-dehydroretinal as visual pigment. Light-induced isomerization of 11-cis to all-trans retinal triggers a conformational change that activates signaling via G-proteins. Signaling via GNAQ probably mediates the activation of phospholipase C. This is Rhodopsin (RHO) from Procambarus seminolae (Crayfish).